The chain runs to 373 residues: Queuine tRNA-ribosyltransferase (373 aa).

Residue D90 is the Proton acceptor of the active site. Substrate contacts are provided by residues 90–94, D144, Q193, and G220; that span reads DSGGF. Residues 251–257 form an RNA binding region; sequence GVGTPED. D270 functions as the Nucleophile in the catalytic mechanism. The interval 275–279 is RNA binding; important for wobble base 34 recognition; the sequence is TRNAR. C308, C310, C313, and H339 together coordinate Zn(2+).

It belongs to the queuine tRNA-ribosyltransferase family. As to quaternary structure, homodimer. Within each dimer, one monomer is responsible for RNA recognition and catalysis, while the other monomer binds to the replacement base PreQ1. The cofactor is Zn(2+).

It carries out the reaction 7-aminomethyl-7-carbaguanine + guanosine(34) in tRNA = 7-aminomethyl-7-carbaguanosine(34) in tRNA + guanine. The protein operates within tRNA modification; tRNA-queuosine biosynthesis. In terms of biological role, catalyzes the base-exchange of a guanine (G) residue with the queuine precursor 7-aminomethyl-7-deazaguanine (PreQ1) at position 34 (anticodon wobble position) in tRNAs with GU(N) anticodons (tRNA-Asp, -Asn, -His and -Tyr). Catalysis occurs through a double-displacement mechanism. The nucleophile active site attacks the C1' of nucleotide 34 to detach the guanine base from the RNA, forming a covalent enzyme-RNA intermediate. The proton acceptor active site deprotonates the incoming PreQ1, allowing a nucleophilic attack on the C1' of the ribose to form the product. After dissociation, two additional enzymatic reactions on the tRNA convert PreQ1 to queuine (Q), resulting in the hypermodified nucleoside queuosine (7-(((4,5-cis-dihydroxy-2-cyclopenten-1-yl)amino)methyl)-7-deazaguanosine). This is Queuine tRNA-ribosyltransferase from Campylobacter jejuni subsp. jejuni serotype O:23/36 (strain 81-176).